We begin with the raw amino-acid sequence, 386 residues long: Ethanolamine kinase 2 (386 aa).

This sequence belongs to the choline/ethanolamine kinase family. In terms of tissue distribution, expressed in kidney, liver, ovary, testis and prostate.

The enzyme catalyses ethanolamine + ATP = phosphoethanolamine + ADP + H(+). It participates in phospholipid metabolism; phosphatidylethanolamine biosynthesis; phosphatidylethanolamine from ethanolamine: step 1/3. Its function is as follows. Highly specific for ethanolamine phosphorylation. Does not have choline kinase activity. The sequence is that of Ethanolamine kinase 2 (ETNK2) from Homo sapiens (Human).